The primary structure comprises 108 residues: Replication initiation control protein YabA (108 aa).

Zn(2+)-binding residues include His-83, Cys-85, Cys-99, and Cys-102.

This sequence belongs to the YabA family. Homotetramer. Interacts with both DnaA and DnaN, acting as a bridge between these two proteins. Zn(2+) is required as a cofactor.

It is found in the cytoplasm. Its subcellular location is the nucleoid. Functionally, involved in control of chromosome replication initiation. Inhibits the cooperative binding of DnaA to the oriC region, thus negatively regulating initiation of chromosome replication. Inhibits the ability of DnaA-ATP to form a helix on DNA; does not disassemble preformed DnaA-DNA helices. Decreases the residence time of DnaA on the chromosome at its binding sites (oriC, replication forks and promoter-binding sites). Tethers DnaA to the replication machinery via the DNA polymerase beta sliding clamp subunit (dnaN). Associates with oriC and other DnaA targets on the chromosome in a DnaA-dependent manner. The sequence is that of Replication initiation control protein YabA from Lactococcus lactis subsp. lactis (strain IL1403) (Streptococcus lactis).